The primary structure comprises 357 residues: Dihydroorotate dehydrogenase (quinone) (357 aa).

Residues 67–71 and Thr-91 each bind FMN; that span reads AGFDK. Substrate is bound at residue Lys-71. 116–120 lines the substrate pocket; the sequence is NRMGF. 2 residues coordinate FMN: Asn-153 and Asn-186. Residue Asn-186 coordinates substrate. Ser-189 functions as the Nucleophile in the catalytic mechanism. Asn-191 contributes to the substrate binding site. FMN-binding residues include Lys-228 and Thr-256. Substrate is bound at residue 257–258; it reads NT. Residues Gly-282, Gly-311, and 332 to 333 each bind FMN; that span reads YT.

Belongs to the dihydroorotate dehydrogenase family. Type 2 subfamily. In terms of assembly, monomer. It depends on FMN as a cofactor.

The protein localises to the cell membrane. The catalysed reaction is (S)-dihydroorotate + a quinone = orotate + a quinol. Its pathway is pyrimidine metabolism; UMP biosynthesis via de novo pathway; orotate from (S)-dihydroorotate (quinone route): step 1/1. Catalyzes the conversion of dihydroorotate to orotate with quinone as electron acceptor. This chain is Dihydroorotate dehydrogenase (quinone), found in Arthrobacter sp. (strain FB24).